Consider the following 94-residue polypeptide: Co-chaperonin GroES (94 aa).

This sequence belongs to the GroES chaperonin family. As to quaternary structure, heptamer of 7 subunits arranged in a ring. Interacts with the chaperonin GroEL.

The protein localises to the cytoplasm. Functionally, together with the chaperonin GroEL, plays an essential role in assisting protein folding. The GroEL-GroES system forms a nano-cage that allows encapsulation of the non-native substrate proteins and provides a physical environment optimized to promote and accelerate protein folding. GroES binds to the apical surface of the GroEL ring, thereby capping the opening of the GroEL channel. In Listeria innocua serovar 6a (strain ATCC BAA-680 / CLIP 11262), this protein is Co-chaperonin GroES.